The following is a 951-amino-acid chain: Cation channel sperm-associated auxiliary subunit epsilon (951 aa).

An N-terminal signal peptide occupies residues 1 to 19 (MSAREVAVLLLWLSCYGSA). At 20 to 903 (LWRYSTNSPN…ETFGLIPSPS (884 aa)) the chain is on the extracellular side. Intrachain disulfides connect C57–C71, C101–C206, C246–C336, and C410–C413. N-linked (GlcNAc...) asparagine glycans are attached at residues N61 and N114. 5 N-linked (GlcNAc...) asparagine glycosylation sites follow: N414, N472, N487, N493, and N535. 4 cysteine pairs are disulfide-bonded: C583-C690, C703-C885, C719-C752, and C804-C835. N-linked (GlcNAc...) asparagine glycosylation is present at N796. N-linked (GlcNAc...) asparagine glycans are attached at residues N854, N881, and N886. A helical transmembrane segment spans residues 904–924 (VYLVASFLFVLMLLFFTILVL). The Cytoplasmic portion of the chain corresponds to 925–951 (SYFRYMRIYRRYIYEPLHKPQRKRKKN).

It belongs to the CATSPERD family. Component of the CatSper complex or CatSpermasome composed of the core pore-forming members CATSPER1, CATSPER2, CATSPER3 and CATSPER4 as well as auxiliary members CATSPERB, CATSPERG, CATSPERD, CATSPERE, CATSPERZ, C2CD6/CATSPERT, TMEM249, TMEM262 and EFCAB9. HSPA1 may be an additional auxiliary complex member. The core complex members CATSPER1, CATSPER2, CATSPER3 and CATSPER4 form a heterotetrameric channel. The auxiliary CATSPERB, CATSPERG, CATSPERD and CATSPERE subunits form a pavilion-like structure over the pore which stabilizes the complex through interactions with CATSPER4, CATSPER3, CATSPER1 and CATSPER2 respectively. TMEM262/CATSPERH interacts with CATSPERB, further stabilizing the complex. C2CD6/CATSPERT interacts at least with CATSPERD and is required for targeting the CatSper complex in the flagellar membrane.

The protein resides in the cell projection. It is found in the cilium. The protein localises to the flagellum membrane. Its function is as follows. Auxiliary component of the CatSper complex, a complex involved in sperm cell hyperactivation. Sperm cell hyperactivation is needed for sperm motility which is essential late in the preparation of sperm for fertilization. The chain is Cation channel sperm-associated auxiliary subunit epsilon from Homo sapiens (Human).